Reading from the N-terminus, the 82-residue chain is Immediate early response 3-interacting protein 1 (82 aa).

2 helical membrane passes run 2-22 (AFTL…VAVL) and 62-82 (VMRV…LLFG).

This sequence belongs to the YOS1 family.

It is found in the endoplasmic reticulum membrane. In terms of biological role, regulator of endoplasmic reticulum secretion that acts as a key determinant of brain size. Required for secretion of extracellular matrix proteins. Required for correct brain development by depositing sufficient extracellular matrix proteins for tissue integrity and the proliferation of neural progenitors. Acts as a regulator of the unfolded protein response (UPR). The sequence is that of Immediate early response 3-interacting protein 1 from Xenopus laevis (African clawed frog).